Here is an 868-residue protein sequence, read N- to C-terminus: Receptor-like protein kinase At5g59670 (868 aa).

The first 22 residues, 1–22 (MESSFGLLLALLTLTIIHIVQA), serve as a signal peptide directing secretion. Over 23–500 (QDPQGFISLD…PRLIKPPKKE (478 aa)) the chain is Extracellular. Asn38, Asn94, Asn141, Asn287, Asn300, Asn372, Asn405, Asn416, Asn423, Asn445, Asn464, and Asn471 each carry an N-linked (GlcNAc...) asparagine glycan. LRR repeat units lie at residues 409-432 (PPRITSLNLSSSRLNGTIAAAIQS), 433-459 (ITQLETLDLSYNNLTGEVPEFLGKMKS), and 461-481 (SVINLSGNNLNGSIPQALRKK). The chain crosses the membrane as a helical span at residues 501–521 (FPVAIVTLVVFVTVIVVLFLV). Residues 522-868 (FRKKMSTIVK…LDTTAVPMAR (347 aa)) are Cytoplasmic-facing. Thr555 carries the post-translational modification Phosphothreonine. The Protein kinase domain occupies 564–834 (KNFQRVLGKG…SMSQVIHELK (271 aa)). Residues 570 to 578 (LGKGGFGMV) and Lys592 contribute to the ATP site. Position 637 is a phosphotyrosine (Tyr637). Residue Asp689 is the Proton acceptor of the active site. Ser723 bears the Phosphoserine mark. A phosphothreonine mark is found at Thr724 and Thr729.

The protein belongs to the protein kinase superfamily. Ser/Thr protein kinase family. Autophosphorylated on Tyr and Thr residues.

The protein localises to the cell membrane. The enzyme catalyses L-seryl-[protein] + ATP = O-phospho-L-seryl-[protein] + ADP + H(+). It catalyses the reaction L-threonyl-[protein] + ATP = O-phospho-L-threonyl-[protein] + ADP + H(+). It carries out the reaction L-tyrosyl-[protein] + ATP = O-phospho-L-tyrosyl-[protein] + ADP + H(+). In terms of biological role, probable receptor with a dual specificity kinase activity acting on both serine/threonine- and tyrosine-containing substrates. This is Receptor-like protein kinase At5g59670 from Arabidopsis thaliana (Mouse-ear cress).